A 222-amino-acid polypeptide reads, in one-letter code: UPF0585 protein CG18661 (222 aa).

It belongs to the UPF0585 family.

In Drosophila melanogaster (Fruit fly), this protein is UPF0585 protein CG18661.